Consider the following 72-residue polypeptide: Translation initiation factor IF-1 (72 aa).

An S1-like domain is found at 1-72 (MAKDDVIQMQ…SRARIVFRAK (72 aa)).

The protein belongs to the IF-1 family. In terms of assembly, component of the 30S ribosomal translation pre-initiation complex which assembles on the 30S ribosome in the order IF-2 and IF-3, IF-1 and N-formylmethionyl-tRNA(fMet); mRNA recruitment can occur at any time during PIC assembly.

The protein resides in the cytoplasm. Its function is as follows. One of the essential components for the initiation of protein synthesis. Stabilizes the binding of IF-2 and IF-3 on the 30S subunit to which N-formylmethionyl-tRNA(fMet) subsequently binds. Helps modulate mRNA selection, yielding the 30S pre-initiation complex (PIC). Upon addition of the 50S ribosomal subunit IF-1, IF-2 and IF-3 are released leaving the mature 70S translation initiation complex. This Burkholderia mallei (strain NCTC 10247) protein is Translation initiation factor IF-1.